Consider the following 512-residue polypeptide: Probable amidase At4g34880 (512 aa).

Active-site charge relay system residues include K117 and S198. Catalysis depends on S222, which acts as the Acyl-ester intermediate.

The protein belongs to the amidase family. Expressed in vasculature of roots, cotyledons, leaves and sepals.

The catalysed reaction is a monocarboxylic acid amide + H2O = a monocarboxylate + NH4(+). The polypeptide is Probable amidase At4g34880 (Arabidopsis thaliana (Mouse-ear cress)).